Reading from the N-terminus, the 1095-residue chain is Solute carrier family 12 member 1 (1095 aa).

Residues 1–173 lie on the Cytoplasmic side of the membrane; sequence MSVNIPSNSV…EEDVTGVVKF (173 aa). The RFXV motif motif lies at 16–19; sequence RFQV. A disordered region spans residues 26-45; the sequence is HGSGAAMSDSTDPPHYEETS. Phosphoserine occurs at positions 57 and 87. Phosphothreonine is present on residues threonine 91, threonine 96, threonine 101, and threonine 114. Phosphoserine is present on serine 116. Serine 126 carries the phosphoserine; by AMPK modification. Serine 144 carries the phosphoserine modification. Residues 174–194 form a helical membrane-spanning segment; the sequence is GWVKGVLVRCMLNIWGVMLFI. Topologically, residues 195–197 are extracellular; it reads RLS. A helical membrane pass occupies residues 198–218; it reads WIVGEAGIGLGVIIIGLSVVV. Over 219–255 the chain is Cytoplasmic; sequence TTLTGISMSAICTNGVVRGGGAYYLISRSLGPEFGGS. Residues 256–276 traverse the membrane as a helical segment; sequence IGLIFRFANAVRVAMYVVGFA. Over 277–298 the chain is Extracellular; sequence ETVVDLLKESDSMMVDPTNDIR. The helical transmembrane segment at 299–319 threads the bilayer; it reads IIGSITVVILLGISVAGMEWE. Residues 320–323 lie on the Cytoplasmic side of the membrane; the sequence is AKAQ. A helical transmembrane segment spans residues 324 to 344; it reads VILLVILLIGIANFFIGTVIP. Residues 345 to 375 lie on the Extracellular side of the membrane; the sequence is SNNEKKSRGFFNYQASIFAENFGPSFTEGEG. Residues 376–396 traverse the membrane as a helical segment; sequence FFSVFAIFFPAATGILAGANI. Topologically, residues 397–413 are cytoplasmic; that stretch reads SGDLEDPQDAIPRGTML. A helical transmembrane segment spans residues 414–434; sequence AIFITTVAYIGVAICVRACVV. The Extracellular segment spans residues 435–546; that stretch reads RDATGSMNDT…NNEPLRGYFL (112 aa). Asparagine 442 and asparagine 452 each carry an N-linked (GlcNAc...) asparagine glycan. Helical transmembrane passes span 547–567 and 568–588; these read TFVIAMAFILIAELNVIAPII and SNFFLASYALINFSCFHASYA. Topologically, residues 589–605 are extracellular; it reads KSPGWRPAYGIYNMWVS. The chain crosses the membrane as a helical span at residues 606–626; that stretch reads LFGAILCCAVMFVINWWAAVI. The Cytoplasmic segment spans residues 627-1095; the sequence is TYVIELFLYI…NHKNVLTFYS (469 aa).

This sequence belongs to the SLC12A transporter family. As to quaternary structure, when phosphorylated, interacts with PPP3CB. Post-translationally, phosphorylated at Ser-87, Thr-96 and Thr-101 by OXSR1/OSR1 and STK39/SPAK downstream of WNK kinases (WNK1, WNK2, WNK3 or WNK4), promoting its activity. Expressed predominantly in kidney (at protein level).

The protein localises to the apical cell membrane. The enzyme catalyses K(+)(out) + 2 chloride(out) + Na(+)(out) = K(+)(in) + 2 chloride(in) + Na(+)(in). Its activity is regulated as follows. Activated following phosphorylation by OXSR1/OSR1 and STK39/SPAK downstream of WNK kinases (WNK1, WNK2, WNK3 or WNK4). Renal sodium, potassium and chloride ion cotransporter that mediates the transepithelial NaCl reabsorption in the thick ascending limb and plays an essential role in the urinary concentration and volume regulation. Electrically silent transporter system. This chain is Solute carrier family 12 member 1 (Slc12a1), found in Rattus norvegicus (Rat).